A 265-amino-acid chain; its full sequence is 3-methyl-2-oxobutanoate hydroxymethyltransferase (265 aa).

2 residues coordinate Mg(2+): Asp44 and Asp83. Residues 44 to 45, Asp83, and Lys113 each bind 3-methyl-2-oxobutanoate; that span reads DS. Glu115 provides a ligand contact to Mg(2+). Glu182 (proton acceptor) is an active-site residue.

This sequence belongs to the PanB family. Homodecamer; pentamer of dimers. The cofactor is Mg(2+).

It localises to the cytoplasm. It catalyses the reaction 3-methyl-2-oxobutanoate + (6R)-5,10-methylene-5,6,7,8-tetrahydrofolate + H2O = 2-dehydropantoate + (6S)-5,6,7,8-tetrahydrofolate. It participates in cofactor biosynthesis; (R)-pantothenate biosynthesis; (R)-pantoate from 3-methyl-2-oxobutanoate: step 1/2. Functionally, catalyzes the reversible reaction in which hydroxymethyl group from 5,10-methylenetetrahydrofolate is transferred onto alpha-ketoisovalerate to form ketopantoate. The sequence is that of 3-methyl-2-oxobutanoate hydroxymethyltransferase from Aquifex aeolicus (strain VF5).